The sequence spans 376 residues: Fibromodulin (376 aa).

The first 18 residues, 1 to 18, serve as a signal peptide directing secretion; it reads MQWASILLLRGLCSLSQG. Glutamine 19 is modified (pyrrolidone carboxylic acid). Sulfotyrosine occurs at positions 20, 38, 53, 55, 63, and 65. The 39-residue stretch at 67–105 folds into the LRRNT domain; that stretch reads APPPPEPRDCPQECDCPPNFPTAMYCDNRNLKYLPFVPS. LRR repeat units follow at residues 106–127, 130–143, 156–176, 177–198, 201–222, 224–245, 246–266, and 269–289; these read RMKYVYFQNNQIAAIQEGVFDN, GLLWIALHGNQITS, HLERLYLDHNNLTRMPGPLPR, SLRELHLDHNQISRVPNNALEG, NLTALYLHHNEIQEVGSSMRGL, SLILLDLSYNHLRRVPDGLPSA, LEQLYLEHNNVYTVPDSYFRG, and KLLYVRLSHNSLTNNGLATNT. Asparagine 127 carries an N-linked (GlcNAc...) (keratan sulfate) asparagine glycan. N-linked (GlcNAc...) (keratan sulfate) asparagine glycosylation is present at asparagine 166. A glycan (N-linked (GlcNAc...) (keratan sulfate) asparagine) is linked at asparagine 201. N-linked (GlcNAc...) (keratan sulfate) asparagine glycosylation occurs at asparagine 291. LRR repeat units lie at residues 294–315 and 316–335; these read SLLELDLSYNQLQKIPPVNTNL and ENLYLQGNRINEFSISSFCT. An intrachain disulfide couples cysteine 334 to cysteine 367. Residue asparagine 341 is glycosylated (N-linked (GlcNAc...) asparagine). An LRR 11 repeat occupies 344 to 367; that stretch reads KLQVLRLDGNEIKRSAMPVDAPLC.

It belongs to the small leucine-rich proteoglycan (SLRP) family. SLRP class II subfamily. As to quaternary structure, binds to type I and type II collagen. Binds keratan sulfate chains.

It is found in the secreted. It localises to the extracellular space. The protein localises to the extracellular matrix. Its function is as follows. Affects the rate of fibrils formation. May have a primary role in collagen fibrillogenesis. This chain is Fibromodulin (Fmod), found in Rattus norvegicus (Rat).